A 199-amino-acid polypeptide reads, in one-letter code: Putative AgrB-like protein (199 aa).

Helical transmembrane passes span 43–63 (IIIF…FSFI), 81–101 (YGCL…TRLF), 108–128 (FYIV…PCPN), 139–159 (LKIL…LSPL), and 165–185 (ILIS…KGVI).

The protein belongs to the AgrB family.

It is found in the cell membrane. In terms of biological role, may be involved in the proteolytic processing of a quorum sensing system signal molecule precursor. This chain is Putative AgrB-like protein (cfg02), found in Clostridium beijerinckii (Clostridium MP).